The chain runs to 141 residues: Hemoglobin subunit alpha (141 aa).

One can recognise a Globin domain in the interval 1-141 (VLSGDDKSNL…VSTVLTSKYR (141 aa)). The residue at position 3 (S3) is a Phosphoserine. K7 and K11 each carry N6-succinyllysine. The residue at position 16 (K16) is an N6-acetyllysine; alternate. Residue K16 is modified to N6-succinyllysine; alternate. Phosphotyrosine is present on Y24. K40 carries the N6-succinyllysine modification. S49 bears the Phosphoserine mark. H58 is a binding site for O2. H87 is a heme b binding site. Position 102 is a phosphoserine (S102). A Phosphothreonine modification is found at T108. Residues S124 and S131 each carry the phosphoserine modification. A phosphothreonine mark is found at T134 and T137. S138 carries the phosphoserine modification.

Belongs to the globin family. As to quaternary structure, heterotetramer of two alpha chains and two beta chains. In terms of tissue distribution, red blood cells.

In terms of biological role, involved in oxygen transport from the lung to the various peripheral tissues. This chain is Hemoglobin subunit alpha, found in Microtus pennsylvanicus (Meadow vole).